The sequence spans 524 residues: Metal transporter Nramp2 (524 aa).

The interval 34–58 (AYDSDDKVSIAVSDSDSEDGGGGGG) is disordered. 12 helical membrane-spanning segments follow: residues 70 to 90 (LWRFTGPGFLMCIAFLDPGNL), 98 to 118 (AAAGYQLLWLLLWATVMGALV), 155 to 175 (LALVGADIQEVIGSAIAIKIL), 179 to 199 (TVPLWGGVVITAFDCFIFLFL), 207 to 227 (LEAFFGVLIAVMAVSFAIMFG), 253 to 273 (AVGIVGCIIMPHNVFLHSALV), 295 to 315 (IESILALIVSFFINICVTTVF), 341 to 361 (YGTAFFPILYIWAIGLLASGQ), 389 to 409 (AMITRSFAIIPTMIVALFFDT), 420 to 440 (ALNVLQSIQIPFALIPLITLV), 457 to 477 (VISWIVTVFLMLINGYLILSF), and 486 to 506 (LVRSSLCVVLAVYLAFIVYLI).

The protein belongs to the NRAMP (TC 2.A.55) family.

The protein resides in the membrane. Its function is as follows. Probable metal transporter. In Oryza sativa subsp. japonica (Rice), this protein is Metal transporter Nramp2 (NRAMP2).